The following is a 64-amino-acid chain: MLCLPVFIILLLLASPAAPNPLQTRIQSNLIRAGPEDANIKTDKRIFAGLLASILKPIIDAAKG.

The N-terminal stretch at 1 to 19 (MLCLPVFIILLLLASPAAP) is a signal peptide. Residues 20-43 (NPLQTRIQSNLIRAGPEDANIKTD) constitute a propeptide that is removed on maturation. Lys63 is subject to Lysine amide.

Belongs to the conotoxin T superfamily. As to expression, expressed by the venom duct.

It is found in the secreted. The sequence is that of Conotoxin VnMLCL-05 from Conus ventricosus (Mediterranean cone).